The sequence spans 96 residues: uncharacterized protein (96 aa).

This is an uncharacterized protein from Invertebrate iridescent virus 6 (IIV-6).